A 132-amino-acid polypeptide reads, in one-letter code: 3-aminoacrylate deaminase RutC (132 aa).

Belongs to the RutC family.

It catalyses the reaction (Z)-3-aminoacrylate + H2O + H(+) = 3-oxopropanoate + NH4(+). Its function is as follows. Involved in pyrimidine catabolism. Catalyzes the deamination of 3-aminoacrylate to malonic semialdehyde, a reaction that can also occur spontaneously. RutC may facilitate the reaction and modulate the metabolic fitness, rather than catalyzing essential functions. This is 3-aminoacrylate deaminase RutC from Cronobacter sakazakii (strain ATCC BAA-894) (Enterobacter sakazakii).